The chain runs to 340 residues: Nuclear hormone receptor family member nhr-268 (340 aa).

Residues 1–75 constitute a DNA-binding region (nuclear receptor); sequence MNCLVCSARA…IGMKAASKND (75 aa). 2 NR C4-type zinc fingers span residues 3 to 23 and 39 to 58; these read CLVC…CFAC and CKYF…CRAC. One can recognise an NR LBD domain in the interval 98–337; sequence KNDKNYSNFI…KRLMQDIFSH (240 aa).

This sequence belongs to the nuclear hormone receptor family.

The protein resides in the nucleus. Its function is as follows. Orphan nuclear receptor. The protein is Nuclear hormone receptor family member nhr-268 (nhr-268) of Caenorhabditis elegans.